A 463-amino-acid chain; its full sequence is ATP-dependent protease ATPase subunit HslU (463 aa).

Residues Ile19, Gly61–Glu66, Asp277, Glu341, and Arg413 each bind ATP.

It belongs to the ClpX chaperone family. HslU subfamily. As to quaternary structure, a double ring-shaped homohexamer of HslV is capped on each side by a ring-shaped HslU homohexamer. The assembly of the HslU/HslV complex is dependent on binding of ATP.

It localises to the cytoplasm. In terms of biological role, ATPase subunit of a proteasome-like degradation complex; this subunit has chaperone activity. The binding of ATP and its subsequent hydrolysis by HslU are essential for unfolding of protein substrates subsequently hydrolyzed by HslV. HslU recognizes the N-terminal part of its protein substrates and unfolds these before they are guided to HslV for hydrolysis. This Bacillus cereus (strain B4264) protein is ATP-dependent protease ATPase subunit HslU.